The primary structure comprises 295 residues: MAHQLLCCEVETIRRAYPDANLLNDRVLRAMLKAEETCAPSVSYFKCVQKEILPSMRKIVATWMLEVCEEQKCEEEVFPLAMNYLNRFLSLEPVKKSRLQLLGATCMFVASKMKETIPLTAEKLCIYTDNSIRPDELLQMELLLVNKLKWNLAAMTPHDFIEHFLSKMPVAEENKQIIRKHAQTFVALCATDVKFISNPPSMVAAGSVVAAVQGLHLGSSNSFLSYHRLTRFLSKVIKCDADCLRACQEQIEALLESSLRQAQQQSLDPKAAEEEEEEEEADLACTPTDVRDVNI.

The 125-residue stretch at 28–152 (LRAMLKAEET…LLVNKLKWNL (125 aa)) folds into the Cyclin N-terminal domain. The interval 264–295 (QQSLDPKAAEEEEEEEEADLACTPTDVRDVNI) is disordered. K270 is covalently cross-linked (Glycyl lysine isopeptide (Lys-Gly) (interchain with G-Cter in ubiquitin)). Residues 273 to 282 (EEEEEEEEAD) show a composition bias toward acidic residues. The residue at position 286 (T286) is a Phosphothreonine.

This sequence belongs to the cyclin family. Cyclin D subfamily. Interacts with either CDK4 or CDK6 protein kinase to form a serine/threonine kinase holoenzyme complex. The cyclin subunit imparts substrate specificity to the complex. Component of the ternary complex CCND1/CDK4/CDKN1B required for nuclear translocation and modulation of CDK4-mediated kinase activity. Interacts directly with CDKN1B. Can form similar complexes with either CDKN1A or CDKN2A. Interacts with UHRF2; the interaction ubiquitinates CCND1 and appears to occur independently of phosphorylation. Interacts with USP2. Interacts (via cyclin N-terminal domain) with INSM1 (via N-terminal region); the interaction competes with the binding of CCND1 to CDK4 during cell cycle progression and inhibits CDK4 activity. Interacts with CDK4; the interaction is prevented with the binding of CCND1 to INSM1 during cell cycle progression. In terms of processing, phosphorylation at Thr-286 by MAP kinases is required for ubiquitination and degradation by the DCX(AMBRA1) complex. It also plays an essential role for recognition by the FBXO31 component of SCF (SKP1-cullin-F-box) protein ligase complex following DNA damage. Post-translationally, ubiquitinated at Lys-270 by the DCX(AMBRA1) complex during the transition from G1 to S cell phase, leading to its degradation: ubiquitination is dependent on Thr-286 phosphorylation. The DCX(AMBRA1) complex represents the major regulator of CCND1 stability during the G1/S transition. Also ubiquitinated by the SCF(FBXO4) and Cul7-RING(FBXW8) ubiquitin-protein ligase complexes. Following DNA damage it is ubiquitinated by the SCF(FBXO31) protein ligase complex. SCF(FBXO31) ubiquitination is dependent on Thr-286 phosphorylation. Ubiquitinated also by UHRF2 apparently in a phosphorylation-independent manner. Ubiquitination leads to its degradation and G1 arrest. Deubiquitinated by USP2; leading to its stabilization.

The protein resides in the nucleus. The protein localises to the cytoplasm. Its subcellular location is the nucleus membrane. Its function is as follows. Regulatory component of the cyclin D1-CDK4 (DC) complex that phosphorylates and inhibits members of the retinoblastoma (RB) protein family including RB1 and regulates the cell-cycle during G(1)/S transition. Phosphorylation of RB1 allows dissociation of the transcription factor E2F from the RB/E2F complex and the subsequent transcription of E2F target genes which are responsible for the progression through the G(1) phase. Hypophosphorylates RB1 in early G(1) phase. Cyclin D-CDK4 complexes are major integrators of various mitogenenic and antimitogenic signals. Also a substrate for SMAD3, phosphorylating SMAD3 in a cell-cycle-dependent manner and repressing its transcriptional activity. Component of the ternary complex, cyclin D1/CDK4/CDKN1B, required for nuclear translocation and activity of the cyclin D-CDK4 complex. Exhibits transcriptional corepressor activity with INSM1 on the NEUROD1 and INS promoters in a cell cycle-independent manner. The polypeptide is G1/S-specific cyclin-D1 (CCND1) (Canis lupus familiaris (Dog)).